Consider the following 112-residue polypeptide: uncharacterized protein (112 aa).

Positions 70 to 112 (GLYRGRRPPGRDAARPTTAILFAQGRPPLLDQRAPTRRGSHQR) are disordered.

This is an uncharacterized protein from Homo sapiens (Human).